A 332-amino-acid polypeptide reads, in one-letter code: Solute carrier family 25 member 16 (332 aa).

3 Solcar repeats span residues 34-120, 128-216, and 238-328; these read FYWL…YKTL, SGHV…LKSV, and LKTH…MKQF. 6 consecutive transmembrane segments (helical) span residues 37–57, 88–108, 134–154, 191–211, 244–264, and 299–319; these read LRSF…VAPL, GFLG…PYGA, LMAG…LDMV, GLMP…FTFG, LLCG…FDVT, and GLYR…AVAF.

It belongs to the mitochondrial carrier (TC 2.A.29) family.

It is found in the mitochondrion inner membrane. May be involved in the transport of coenzyme A in the mitochondrial matrix. Very little is known about the physiological function of this carrier. This is Solute carrier family 25 member 16 from Homo sapiens (Human).